A 115-amino-acid chain; its full sequence is DNA repair protein homolog YozK (115 aa).

The 104-residue stretch at 12–115 (ILCVDMKSFY…EKCVHTYSID (104 aa)) folds into the UmuC domain. D16 and D115 together coordinate Mg(2+).

Belongs to the DNA polymerase type-Y family. The cofactor is Mg(2+).

The sequence is that of DNA repair protein homolog YozK (yozK) from Bacillus subtilis (strain 168).